The following is a 235-amino-acid chain: Small ribosomal subunit protein uS2c (235 aa).

This sequence belongs to the universal ribosomal protein uS2 family.

It is found in the plastid. Its subcellular location is the chloroplast. This chain is Small ribosomal subunit protein uS2c (rps2), found in Anthoceros angustus (Hornwort).